A 255-amino-acid chain; its full sequence is Glutamate racemase (255 aa).

Substrate contacts are provided by residues 7 to 8 and 39 to 40; these read DS and YG. Cysteine 70 functions as the Proton donor/acceptor in the catalytic mechanism. Residue 71–72 participates in substrate binding; the sequence is NT. Cysteine 181 functions as the Proton donor/acceptor in the catalytic mechanism. A substrate-binding site is contributed by 182–183; that stretch reads TH.

This sequence belongs to the aspartate/glutamate racemases family.

It carries out the reaction L-glutamate = D-glutamate. The protein operates within cell wall biogenesis; peptidoglycan biosynthesis. Functionally, provides the (R)-glutamate required for cell wall biosynthesis. This is Glutamate racemase from Helicobacter pylori (strain HPAG1).